Here is a 663-residue protein sequence, read N- to C-terminus: Inner nuclear membrane protein HEH2 (663 aa).

Disordered regions lie at residues 46-188 and 267-289; these read QRLQ…ELPN and ISET…KNIR. Residues 47 to 62 show a composition bias toward polar residues; it reads RLQSSPEASKVRTSIQ. The segment covering 91-123 has biased composition (basic and acidic residues); it reads KTVKDENVETNKRKREQISTDNEAKMQIQEEKS. Ser123 is modified (phosphoserine). A compositionally biased stretch (basic residues) spans 124–134; sequence PKKKRKKRSSK. Residues 124 to 137 carry the Nuclear localization signal motif; sequence PKKKRKKRSSKANK. Over residues 164–183 the composition is skewed to basic and acidic residues; sequence EELHKKDSSDDKPRVKELPK. The helical transmembrane segment at 317 to 337 threads the bilayer; it reads LFIWLWNGAIFLSIICPILFG.

In terms of assembly, interacts with SRP1.

It is found in the nucleus inner membrane. This chain is Inner nuclear membrane protein HEH2 (HEH2), found in Saccharomyces cerevisiae (strain ATCC 204508 / S288c) (Baker's yeast).